The sequence spans 495 residues: Lysine--tRNA ligase (495 aa).

Glutamate 406 and glutamate 413 together coordinate Mg(2+).

It belongs to the class-II aminoacyl-tRNA synthetase family. In terms of assembly, homodimer. The cofactor is Mg(2+).

Its subcellular location is the cytoplasm. It carries out the reaction tRNA(Lys) + L-lysine + ATP = L-lysyl-tRNA(Lys) + AMP + diphosphate. This chain is Lysine--tRNA ligase, found in Leptospira borgpetersenii serovar Hardjo-bovis (strain JB197).